Consider the following 250-residue polypeptide: Putative ankyrin repeat protein RBE_0623 (250 aa).

ANK repeat units lie at residues 70–99 (IGDS…EPNT), 104–134 (NCYT…NINE), and 137–166 (GKET…PDKF).

The polypeptide is Putative ankyrin repeat protein RBE_0623 (Rickettsia bellii (strain RML369-C)).